The chain runs to 222 residues: 7-cyano-7-deazaguanine synthase (222 aa).

Residue 9–19 coordinates ATP; it reads LSGGLDSATAA. 4 residues coordinate Zn(2+): C190, C198, C201, and C204.

Belongs to the QueC family. Requires Zn(2+) as cofactor.

It catalyses the reaction 7-carboxy-7-deazaguanine + NH4(+) + ATP = 7-cyano-7-deazaguanine + ADP + phosphate + H2O + H(+). The protein operates within purine metabolism; 7-cyano-7-deazaguanine biosynthesis. In terms of biological role, catalyzes the ATP-dependent conversion of 7-carboxy-7-deazaguanine (CDG) to 7-cyano-7-deazaguanine (preQ(0)). The sequence is that of 7-cyano-7-deazaguanine synthase from Synechococcus sp. (strain RCC307).